Reading from the N-terminus, the 179-residue chain is ATP synthase subunit delta (179 aa).

It belongs to the ATPase delta chain family. As to quaternary structure, F-type ATPases have 2 components, F(1) - the catalytic core - and F(0) - the membrane proton channel. F(1) has five subunits: alpha(3), beta(3), gamma(1), delta(1), epsilon(1). F(0) has three main subunits: a(1), b(2) and c(10-14). The alpha and beta chains form an alternating ring which encloses part of the gamma chain. F(1) is attached to F(0) by a central stalk formed by the gamma and epsilon chains, while a peripheral stalk is formed by the delta and b chains.

The protein localises to the cell inner membrane. Functionally, f(1)F(0) ATP synthase produces ATP from ADP in the presence of a proton or sodium gradient. F-type ATPases consist of two structural domains, F(1) containing the extramembraneous catalytic core and F(0) containing the membrane proton channel, linked together by a central stalk and a peripheral stalk. During catalysis, ATP synthesis in the catalytic domain of F(1) is coupled via a rotary mechanism of the central stalk subunits to proton translocation. This protein is part of the stalk that links CF(0) to CF(1). It either transmits conformational changes from CF(0) to CF(1) or is implicated in proton conduction. This is ATP synthase subunit delta from Anaeromyxobacter sp. (strain Fw109-5).